We begin with the raw amino-acid sequence, 469 residues long: UDP-N-acetylmuramoylalanine--D-glutamate ligase (469 aa).

Residue Gly121–Thr127 participates in ATP binding.

This sequence belongs to the MurCDEF family.

It is found in the cytoplasm. The enzyme catalyses UDP-N-acetyl-alpha-D-muramoyl-L-alanine + D-glutamate + ATP = UDP-N-acetyl-alpha-D-muramoyl-L-alanyl-D-glutamate + ADP + phosphate + H(+). Its pathway is cell wall biogenesis; peptidoglycan biosynthesis. Functionally, cell wall formation. Catalyzes the addition of glutamate to the nucleotide precursor UDP-N-acetylmuramoyl-L-alanine (UMA). The polypeptide is UDP-N-acetylmuramoylalanine--D-glutamate ligase (Agrobacterium fabrum (strain C58 / ATCC 33970) (Agrobacterium tumefaciens (strain C58))).